We begin with the raw amino-acid sequence, 182 residues long: Dual-action ribosomal maturation protein DarP (182 aa).

The tract at residues 1-25 (MEENLADNSEREARPSKTKRKKEMH) is disordered.

The protein belongs to the DarP family.

The protein resides in the cytoplasm. In terms of biological role, member of a network of 50S ribosomal subunit biogenesis factors which assembles along the 30S-50S interface, preventing incorrect 23S rRNA structures from forming. Promotes peptidyl transferase center (PTC) maturation. This Nitrosospira multiformis (strain ATCC 25196 / NCIMB 11849 / C 71) protein is Dual-action ribosomal maturation protein DarP.